A 217-amino-acid chain; its full sequence is Probable transaldolase (217 aa).

The Schiff-base intermediate with substrate role is filled by K83.

This sequence belongs to the transaldolase family. Type 3B subfamily.

Its subcellular location is the cytoplasm. It carries out the reaction D-sedoheptulose 7-phosphate + D-glyceraldehyde 3-phosphate = D-erythrose 4-phosphate + beta-D-fructose 6-phosphate. The protein operates within carbohydrate degradation; pentose phosphate pathway; D-glyceraldehyde 3-phosphate and beta-D-fructose 6-phosphate from D-ribose 5-phosphate and D-xylulose 5-phosphate (non-oxidative stage): step 2/3. Its function is as follows. Transaldolase is important for the balance of metabolites in the pentose-phosphate pathway. This Clostridium botulinum (strain Hall / ATCC 3502 / NCTC 13319 / Type A) protein is Probable transaldolase.